Here is a 982-residue protein sequence, read N- to C-terminus: Collagen alpha-1(I) chain (982 aa).

The disordered stretch occupies residues 1 to 982; that stretch reads GPMGPSGPRG…PGAPGPPGPP (982 aa). Over residues 8-27 the composition is skewed to low complexity; the sequence is PRGFQGPPGEPGEPGASGPM. A compositionally biased stretch (basic and acidic residues) spans 39-53; that stretch reads NGDDGEAGKPGRPGE. The residue at position 81 (Ser-81) is a Phosphoserine. 2 stretches are compositionally biased toward low complexity: residues 89–105 and 128–141; these read DAGPAGPKGEPGSPGEN and PAGARGNDGATGAA. Residues 143-155 are compositionally biased toward pro residues; it reads PPGPTGPAGPPGF. Positions 189–228 are enriched in low complexity; it reads AGAAGPAGNPGADGQPGAKGANGAPGIAGAPGFPGARGPS. The span at 294–303 shows a compositional bias: gly residues; the sequence is GERGGPGSRG. Low complexity-rich tracts occupy residues 304–335, 347–373, 382–401, 425–437, 513–526, 583–597, 610–640, 666–682, and 727–751; these read FPGADGVAGPKGPAGERGAPGPAGPKGSPGEA, KGITGSPGSPGPDGKTGPPGPAGQDGR, ARGQAGVMGFPGPKGAAGEP, AGAQGPPGSAGPA, APGAPGSQGAPGIQ, SGPSGPAGPTGARGA, AGFAGPPGADGQPGAKGEPGDAGAKGDAGPA, SAGPPGATGFPGAAGRV, and AGEKGSPGSDGPAGAPGTPGPQGIA. Ser-586 carries the phosphoserine modification. Pro residues-rich tracts occupy residues 792–802 and 838–853; these read PPGPIGPPGIA and AGPPGAPGAPGAPGPV. Residues 874 to 888 show a composition bias toward low complexity; it reads IGPTGARGPAGPQGP. The segment covering 889-900 has biased composition (basic and acidic residues); it reads RGDKGETGEQGD. A compositionally biased stretch (low complexity) spans 916 to 940; that stretch reads PGEQGPAGASGPAGPRGPPGSAGAP. A compositionally biased stretch (pro residues) spans 966-982; it reads PRGPPGPPGAPGPPGPP.

It belongs to the fibrillar collagen family. Trimers of one alpha 2(I) and two alpha 1(I) chains. In terms of processing, prolines at the third position of the tripeptide repeating unit (G-X-Y) are hydroxylated in some or all of the chains. In terms of tissue distribution, forms the fibrils of tendon, ligaments and bones. In bones, the fibrils are mineralized with calcium hydroxyapatite.

Its subcellular location is the secreted. It is found in the extracellular space. The protein resides in the extracellular matrix. Type I collagen is a member of group I collagen (fibrillar forming collagen). The sequence is that of Collagen alpha-1(I) chain from Toxodon sp.